Here is a 369-residue protein sequence, read N- to C-terminus: Phosphoserine aminotransferase (369 aa).

Position 42 (Arg-42) interacts with L-glutamate. Positions 101, 152, 176, and 199 each coordinate pyridoxal 5'-phosphate. Position 200 is an N6-(pyridoxal phosphate)lysine (Lys-200). 241–242 (NT) is a pyridoxal 5'-phosphate binding site.

Belongs to the class-V pyridoxal-phosphate-dependent aminotransferase family. SerC subfamily. As to quaternary structure, homodimer. Pyridoxal 5'-phosphate serves as cofactor.

The protein localises to the cytoplasm. The enzyme catalyses O-phospho-L-serine + 2-oxoglutarate = 3-phosphooxypyruvate + L-glutamate. It carries out the reaction 4-(phosphooxy)-L-threonine + 2-oxoglutarate = (R)-3-hydroxy-2-oxo-4-phosphooxybutanoate + L-glutamate. It functions in the pathway amino-acid biosynthesis; L-serine biosynthesis; L-serine from 3-phospho-D-glycerate: step 2/3. It participates in cofactor biosynthesis; pyridoxine 5'-phosphate biosynthesis; pyridoxine 5'-phosphate from D-erythrose 4-phosphate: step 3/5. In terms of biological role, catalyzes the reversible conversion of 3-phosphohydroxypyruvate to phosphoserine and of 3-hydroxy-2-oxo-4-phosphonooxybutanoate to phosphohydroxythreonine. In Delftia acidovorans (strain DSM 14801 / SPH-1), this protein is Phosphoserine aminotransferase.